The sequence spans 270 residues: Probable ribosomal RNA small subunit methyltransferase A (270 aa).

S-adenosyl-L-methionine-binding residues include His-19, Leu-21, Gly-46, Glu-67, Asp-92, and Asn-107.

The protein belongs to the class I-like SAM-binding methyltransferase superfamily. rRNA adenine N(6)-methyltransferase family. RsmA subfamily.

It localises to the cytoplasm. Its function is as follows. Specifically dimethylates two adjacent adenosines in the loop of a conserved hairpin near the 3'-end of 16S rRNA in the 30S particle. May play a critical role in biogenesis of 30S subunits. This chain is Probable ribosomal RNA small subunit methyltransferase A, found in Methanococcoides burtonii (strain DSM 6242 / NBRC 107633 / OCM 468 / ACE-M).